The following is a 103-amino-acid chain: Small ribosomal subunit protein eS24 (103 aa).

This sequence belongs to the eukaryotic ribosomal protein eS24 family.

The protein is Small ribosomal subunit protein eS24 of Methanococcus maripaludis (strain C6 / ATCC BAA-1332).